The primary structure comprises 341 residues: THO complex subunit 6 homolog (341 aa).

WD repeat units follow at residues 22–61, 74–112, 124–163, 166–205, 215–254, 256–293, and 295–339; these read RLHM…SSEA, AHDG…GCKE, LEVP…FTRA, GHTD…EVQT, SRPH…PTTV, PIRA…KAQV, and GSSP…AFSL. Residue S180 is modified to Phosphoserine.

This sequence belongs to the WD repeat THOC6 family. Component of the THO subcomplex, which is composed of THOC1, THOC2, THOC3, THOC5, THOC6 and THOC7. The THO subcomplex interacts with DDX39B to form the THO-DDX39B complex which multimerizes into a 28-subunit tetrameric assembly. Component of the transcription/export (TREX) complex at least composed of ALYREF/THOC4, DDX39B, SARNP/CIP29, CHTOP and the THO subcomplex; in the complex interacts with THOC5; together with THOC5 and THOC7, plays a key structural role in the oligomerization of the THO-DDX39B complex. TREX seems to have a dynamic structure involving ATP-dependent remodeling.

The protein localises to the nucleus. It is found in the nucleus speckle. Component of the THO subcomplex of the TREX complex which is thought to couple mRNA transcription, processing and nuclear export, and which specifically associates with spliced mRNA and not with unspliced pre-mRNA. Plays a key structural role in the oligomerization of the THO-DDX39B complex. TREX is recruited to spliced mRNAs by a transcription-independent mechanism, binds to mRNA upstream of the exon-junction complex (EJC) and is recruited in a splicing- and cap-dependent manner to a region near the 5' end of the mRNA where it functions in mRNA export to the cytoplasm via the TAP/NXF1 pathway. Plays a role in apoptosis negative control involved in brain development. The sequence is that of THO complex subunit 6 homolog (Thoc6) from Rattus norvegicus (Rat).